Here is a 174-residue protein sequence, read N- to C-terminus: uncharacterized protein (174 aa).

This is an uncharacterized protein from Mycobacterium tuberculosis (strain CDC 1551 / Oshkosh).